Reading from the N-terminus, the 83-residue chain is MKKNSVISQEEKKGSAAFQVFGFTNKIRRLSAHLELHKKDYSSQRGLRKILGKRQRLLAYFSKKNRVRYKELINQLNIREIKR.

The protein belongs to the universal ribosomal protein uS15 family. Part of the 30S ribosomal subunit.

The protein resides in the plastid. It localises to the chloroplast. This chain is Small ribosomal subunit protein uS15c (rps15), found in Fagopyrum esculentum subsp. ancestrale (Wild buckwheat).